The sequence spans 686 residues: Delta-like protein 4 (686 aa).

Residues 1–26 (MTPASRSACRWALLLLAVLWPQQRAA) form the signal peptide. Residues 27–532 (GSGIFQLRLQ…GLPPSFPWVA (506 aa)) lie on the Extracellular side of the membrane. 2 disulfides stabilise this stretch: Cys51/Cys55 and Cys62/Cys75. Asn79, Asn109, and Asn162 each carry an N-linked (GlcNAc...) asparagine glycan. Residues 174–218 (VICSDNYYGESCSRLCKKRDDHFGHYECQPDGSLSCLPGWTGKYC) form the DSL domain. The cysteines at positions 176 and 185 are disulfide-linked. Interaction with Notch1 regions lie at residues 186–188 (SRL) and 192–196 (RDDHF). Cystine bridges form between Cys189/Cys201, Cys209/Cys218, Cys223/Cys234, Cys227/Cys240, Cys242/Cys251, Cys254/Cys265, Cys260/Cys271, Cys273/Cys282, Cys289/Cys301, Cys295/Cys311, Cys313/Cys322, Cys329/Cys340, Cys334/Cys349, Cys351/Cys360, Cys367/Cys378, Cys372/Cys389, Cys391/Cys400, Cys407/Cys418, Cys412/Cys427, Cys429/Cys438, Cys445/Cys456, Cys450/Cys465, Cys467/Cys476, Cys485/Cys496, Cys490/Cys507, and Cys509/Cys518. 8 EGF-like domains span residues 219-252 (DQPI…RLCN), 253-283 (ECIP…LFCD), 285-323 (DLNY…EHCE), 325-361 (GLSK…QHCE), 364-401 (TLTC…SNCE), 403-439 (KVDR…THCE), 441-477 (HISD…RRCE), and 481-519 (THDA…SRCE). The N-linked (GlcNAc...) asparagine glycan is linked to Asn297. A glycan (N-linked (GlcNAc...) asparagine) is linked at Asn394. Residues 533 to 553 (VSLGVGLVVLLVLLVMVVVAV) traverse the membrane as a helical segment. Topologically, residues 554–686 (RQLRLRRPDD…RNECVIATEV (133 aa)) are cytoplasmic.

Interacts with NOTCH4. Interacts (via N-terminal DSL and MNNL domains) with NOTCH1 (via EGF-like domains). In terms of tissue distribution, expressed in vascular endothelium. Expressed in retina at least during embryogenesis.

The protein resides in the cell membrane. Involved in the Notch signaling pathway as Notch ligand. Activates NOTCH1 and NOTCH4. Involved in angiogenesis; negatively regulates endothelial cell proliferation and migration and angiogenic sprouting. Essential for retinal progenitor proliferation. Required for suppressing rod fates in late retinal progenitors as well as for proper generation of other retinal cell types. During spinal cord neurogenesis, inhibits V2a interneuron fate. The sequence is that of Delta-like protein 4 (Dll4) from Mus musculus (Mouse).